Reading from the N-terminus, the 628-residue chain is ATP-dependent zinc metalloprotease FtsH 4 (628 aa).

At 1 to 14 (MAIKPQPQWQRRLA) the chain is on the cytoplasmic side. Residues 15–35 (SVLLWGSTIYLLVNLLAPALF) form a helical membrane-spanning segment. Over 36–119 (RSQPPQVPYS…AAAPPAKNSW (84 aa)) the chain is Lumenal. The helical transmembrane segment at 120-140 (FGTLLSWVIPPLIFVGIWSFF) threads the bilayer. The Cytoplasmic segment spans residues 141 to 628 (LNRNNNGAPG…QVQAPGTLVV (488 aa)). 214–221 (GPPGTGKT) contributes to the ATP binding site. A Zn(2+)-binding site is contributed by H438. E439 is an active-site residue. Zn(2+)-binding residues include H442 and D515.

In the central section; belongs to the AAA ATPase family. It in the C-terminal section; belongs to the peptidase M41 family. In terms of assembly, homohexamer. It depends on Zn(2+) as a cofactor.

It is found in the cellular thylakoid membrane. Functionally, acts as a processive, ATP-dependent zinc metallopeptidase for both cytoplasmic and membrane proteins. Plays a role in the quality control of integral membrane proteins. The chain is ATP-dependent zinc metalloprotease FtsH 4 from Synechocystis sp. (strain ATCC 27184 / PCC 6803 / Kazusa).